Reading from the N-terminus, the 172-residue chain is Ribosome maturation factor RimM (172 aa).

A PRC barrel domain is found at 96 to 168 (EGEFYYHQII…RVDVELMEGL (73 aa)).

The protein belongs to the RimM family. As to quaternary structure, binds ribosomal protein uS19.

It is found in the cytoplasm. In terms of biological role, an accessory protein needed during the final step in the assembly of 30S ribosomal subunit, possibly for assembly of the head region. Essential for efficient processing of 16S rRNA. May be needed both before and after RbfA during the maturation of 16S rRNA. It has affinity for free ribosomal 30S subunits but not for 70S ribosomes. The chain is Ribosome maturation factor RimM from Streptococcus pyogenes serotype M18 (strain MGAS8232).